We begin with the raw amino-acid sequence, 144 residues long: Transcription antitermination protein NusB (144 aa).

This sequence belongs to the NusB family.

Functionally, involved in transcription antitermination. Required for transcription of ribosomal RNA (rRNA) genes. Binds specifically to the boxA antiterminator sequence of the ribosomal RNA (rrn) operons. This Histophilus somni (strain 2336) (Haemophilus somnus) protein is Transcription antitermination protein NusB.